Reading from the N-terminus, the 88-residue chain is UPF0297 protein Cphy_2298 (88 aa).

Belongs to the UPF0297 family.

The polypeptide is UPF0297 protein Cphy_2298 (Lachnoclostridium phytofermentans (strain ATCC 700394 / DSM 18823 / ISDg) (Clostridium phytofermentans)).